Consider the following 237-residue polypeptide: Phosphoribosylaminoimidazole-succinocarboxamide synthase (237 aa).

This sequence belongs to the SAICAR synthetase family.

It carries out the reaction 5-amino-1-(5-phospho-D-ribosyl)imidazole-4-carboxylate + L-aspartate + ATP = (2S)-2-[5-amino-1-(5-phospho-beta-D-ribosyl)imidazole-4-carboxamido]succinate + ADP + phosphate + 2 H(+). It participates in purine metabolism; IMP biosynthesis via de novo pathway; 5-amino-1-(5-phospho-D-ribosyl)imidazole-4-carboxamide from 5-amino-1-(5-phospho-D-ribosyl)imidazole-4-carboxylate: step 1/2. The sequence is that of Phosphoribosylaminoimidazole-succinocarboxamide synthase from Cronobacter sakazakii (strain ATCC BAA-894) (Enterobacter sakazakii).